The chain runs to 64 residues: Ferredoxin-like protein in nif region (64 aa).

A 4Fe-4S ferredoxin-type domain is found at 2 to 30 (AFKIIASQCTQCGACEFECPSNAIELKGE). [4Fe-4S] cluster-binding residues include cysteine 10, cysteine 13, cysteine 16, cysteine 20, cysteine 39, cysteine 42, cysteine 51, and cysteine 55.

It depends on [4Fe-4S] cluster as a cofactor.

In Sinorhizobium fredii (strain NBRC 101917 / NGR234), this protein is Ferredoxin-like protein in nif region (fdxN).